The primary structure comprises 308 residues: Glycine--tRNA ligase alpha subunit (308 aa).

Belongs to the class-II aminoacyl-tRNA synthetase family. As to quaternary structure, tetramer of two alpha and two beta subunits.

Its subcellular location is the cytoplasm. It catalyses the reaction tRNA(Gly) + glycine + ATP = glycyl-tRNA(Gly) + AMP + diphosphate. In Brucella abortus (strain 2308), this protein is Glycine--tRNA ligase alpha subunit.